We begin with the raw amino-acid sequence, 64 residues long: MCCLPVFVILLLLIASAPSVDALPKTKDDMSLASFHDNAKRTLQILSNKRYCCVYDYSCCLSWG.

The signal sequence occupies residues 1 to 22 (MCCLPVFVILLLLIASAPSVDA). A propeptide spanning residues 23–48 (LPKTKDDMSLASFHDNAKRTLQILSN) is cleaved from the precursor. Tryptophan 63 bears the Tryptophan amide mark.

This sequence belongs to the conotoxin T superfamily. In terms of processing, contains 2 disulfide bonds that can be either 'C1-C3, C2-C4' or 'C1-C4, C2-C3', since these disulfide connectivities have been observed for conotoxins with cysteine framework V (for examples, see AC P0DQQ7 and AC P81755). As to expression, expressed by the venom duct.

It is found in the secreted. This chain is Conotoxin Pn-B01121, found in Conus pennaceus (Feathered cone).